The following is a 161-amino-acid chain: Cytochrome c-type biogenesis protein CcmE (161 aa).

Residues 1–8 (MNARRKKR) are Cytoplasmic-facing. A helical; Signal-anchor for type II membrane protein membrane pass occupies residues 9 to 29 (LTLAVALIGGVAAIASLLLYA). Over 30-161 (LNSNLNLFYT…DYNEQQKTSY (132 aa)) the chain is Periplasmic. The heme site is built by His131 and Tyr135.

Belongs to the CcmE/CycJ family.

The protein localises to the cell inner membrane. Heme chaperone required for the biogenesis of c-type cytochromes. Transiently binds heme delivered by CcmC and transfers the heme to apo-cytochromes in a process facilitated by CcmF and CcmH. In Shewanella sediminis (strain HAW-EB3), this protein is Cytochrome c-type biogenesis protein CcmE.